Reading from the N-terminus, the 371-residue chain is Queuine tRNA-ribosyltransferase (371 aa).

The active-site Proton acceptor is the D90. Substrate contacts are provided by residues 90 to 94 (DSGGF), D144, Q188, and G215. Residues 246-252 (GVGTPED) are RNA binding. Residue D265 is the Nucleophile of the active site. Positions 270 to 274 (TRNAR) are RNA binding; important for wobble base 34 recognition. 4 residues coordinate Zn(2+): C303, C305, C308, and H334.

The protein belongs to the queuine tRNA-ribosyltransferase family. In terms of assembly, homodimer. Within each dimer, one monomer is responsible for RNA recognition and catalysis, while the other monomer binds to the replacement base PreQ1. The cofactor is Zn(2+).

The catalysed reaction is 7-aminomethyl-7-carbaguanine + guanosine(34) in tRNA = 7-aminomethyl-7-carbaguanosine(34) in tRNA + guanine. Its pathway is tRNA modification; tRNA-queuosine biosynthesis. Its function is as follows. Catalyzes the base-exchange of a guanine (G) residue with the queuine precursor 7-aminomethyl-7-deazaguanine (PreQ1) at position 34 (anticodon wobble position) in tRNAs with GU(N) anticodons (tRNA-Asp, -Asn, -His and -Tyr). Catalysis occurs through a double-displacement mechanism. The nucleophile active site attacks the C1' of nucleotide 34 to detach the guanine base from the RNA, forming a covalent enzyme-RNA intermediate. The proton acceptor active site deprotonates the incoming PreQ1, allowing a nucleophilic attack on the C1' of the ribose to form the product. After dissociation, two additional enzymatic reactions on the tRNA convert PreQ1 to queuine (Q), resulting in the hypermodified nucleoside queuosine (7-(((4,5-cis-dihydroxy-2-cyclopenten-1-yl)amino)methyl)-7-deazaguanosine). The chain is Queuine tRNA-ribosyltransferase from Neisseria meningitidis serogroup A / serotype 4A (strain DSM 15465 / Z2491).